A 310-amino-acid polypeptide reads, in one-letter code: Alpha/beta hydrolase domain-containing protein 17A (310 aa).

Catalysis depends on charge relay system residues serine 190, aspartate 255, and histidine 284. Serine 307 carries the post-translational modification Phosphoserine.

Belongs to the AB hydrolase superfamily. ABHD17 family. Palmitoylated on cysteine residues located in a cysteine cluster at the N-terminus which promotes membrane localization. Palmitoylation is required for post-synaptic localization and for depalmitoylating activity towards DLG4/PSD95.

The protein resides in the cell membrane. The protein localises to the endosome membrane. It localises to the cell projection. It is found in the dendritic spine. Its subcellular location is the postsynaptic density membrane. It carries out the reaction S-hexadecanoyl-L-cysteinyl-[protein] + H2O = L-cysteinyl-[protein] + hexadecanoate + H(+). Functionally, hydrolyzes fatty acids from S-acylated cysteine residues in proteins. Has depalmitoylating activity towards NRAS. Has depalmitoylating activity towards DLG4/PSD95. May have depalmitoylating activity towards MAP6. This Bos taurus (Bovine) protein is Alpha/beta hydrolase domain-containing protein 17A.